The primary structure comprises 49 residues: Large ribosomal subunit protein bL33A (49 aa).

This sequence belongs to the bacterial ribosomal protein bL33 family.

The polypeptide is Large ribosomal subunit protein bL33A (Levilactobacillus brevis (strain ATCC 367 / BCRC 12310 / CIP 105137 / JCM 1170 / LMG 11437 / NCIMB 947 / NCTC 947) (Lactobacillus brevis)).